We begin with the raw amino-acid sequence, 385 residues long: Tryptophan--tRNA ligase (385 aa).

Residues 82-90 carry the 'HIGH' region motif; that stretch reads PSGPMHIGH. The short motif at 253–257 is the 'KMSKS' region element; it reads KMSAS.

The protein belongs to the class-I aminoacyl-tRNA synthetase family.

The protein localises to the cytoplasm. It catalyses the reaction tRNA(Trp) + L-tryptophan + ATP = L-tryptophyl-tRNA(Trp) + AMP + diphosphate + H(+). The polypeptide is Tryptophan--tRNA ligase (Pyrococcus abyssi (strain GE5 / Orsay)).